The primary structure comprises 385 residues: Putative transport protein MT1133 (385 aa).

Transmembrane regions (helical) follow at residues 7 to 27 (LTQK…GAYF), 32 to 52 (FVLI…FKWF), 66 to 86 (LLSA…LAIV), 159 to 179 (SLAG…ALLV), 218 to 238 (FVIA…AGFH), 241 to 261 (FFIF…GGIV), 263 to 283 (IPFG…FVLL), and 319 to 339 (GITM…ILIV).

The protein belongs to the autoinducer-2 exporter (AI-2E) (TC 2.A.86) family.

The protein resides in the cell membrane. The sequence is that of Putative transport protein MT1133 from Mycobacterium tuberculosis (strain CDC 1551 / Oshkosh).